The following is a 73-amino-acid chain: Translation initiation factor IF-1 (73 aa).

In terms of domain architecture, S1-like spans Met-1–Lys-72.

The protein belongs to the IF-1 family. In terms of assembly, component of the 30S ribosomal translation pre-initiation complex which assembles on the 30S ribosome in the order IF-2 and IF-3, IF-1 and N-formylmethionyl-tRNA(fMet); mRNA recruitment can occur at any time during PIC assembly.

Its subcellular location is the cytoplasm. In terms of biological role, one of the essential components for the initiation of protein synthesis. Stabilizes the binding of IF-2 and IF-3 on the 30S subunit to which N-formylmethionyl-tRNA(fMet) subsequently binds. Helps modulate mRNA selection, yielding the 30S pre-initiation complex (PIC). Upon addition of the 50S ribosomal subunit IF-1, IF-2 and IF-3 are released leaving the mature 70S translation initiation complex. The protein is Translation initiation factor IF-1 of Dehalococcoides mccartyi (strain ATCC BAA-2266 / KCTC 15142 / 195) (Dehalococcoides ethenogenes (strain 195)).